The chain runs to 138 residues: ER-derived vesicles protein ERV14 (138 aa).

Over 2 to 6 the chain is Cytoplasmic; sequence GAWLF. Residues 7-27 traverse the membrane as a helical segment; it reads ILAVVVNCINLFGQVHFTILY. Residues 28–52 are Extracellular-facing; the sequence is ADLEADYINPIELCSKVNKLITPEA. A helical membrane pass occupies residues 53 to 73; sequence ALHGALSLLFLLNGYWFVFLL. The Cytoplasmic portion of the chain corresponds to 74–111; that stretch reads NLPVLAYNLNKIYNKVQLLDATEIFRTLGKHKRESFLK. The chain crosses the membrane as a helical span at residues 112-132; the sequence is LGFHLLMFFFYLYRMIMALIA. The Extracellular portion of the chain corresponds to 133-138; the sequence is ESGDDF.

The protein belongs to the cornichon family.

It is found in the endoplasmic reticulum membrane. It localises to the golgi apparatus membrane. Its function is as follows. Could regulate export of the bud site and axial growth sites selection protein AXL2 and possibly other secretory proteins from the endoplasmic reticulum in COPII-coated vesicles. Seems to be required for axial budding pattern in haploid cells. This Saccharomyces cerevisiae (strain ATCC 204508 / S288c) (Baker's yeast) protein is ER-derived vesicles protein ERV14 (ERV14).